Reading from the N-terminus, the 440-residue chain is APO protein 2, chloroplastic (440 aa).

Residues 1 to 62 (MSITYSAISF…SLQLNSRVVL (62 aa)) constitute a chloroplast transit peptide. The segment covering 106-115 (ARERVKNNKD) has biased composition (basic and acidic residues). Positions 106 to 126 (ARERVKNNKDKPKRPLPPPKN) are disordered. 2 APO domains span residues 162 to 247 (ACGW…EIPE) and 332 to 417 (VCGY…VVPE).

It belongs to the APO family.

It localises to the plastid. The protein localises to the chloroplast. Its function is as follows. May be involved in the stable assembly of several 4Fe-4S cluster-containing complexes of chloroplasts. This chain is APO protein 2, chloroplastic (APO2), found in Arabidopsis thaliana (Mouse-ear cress).